The chain runs to 442 residues: Sexual development regulator VELC (442 aa).

2 disordered regions span residues 1–192 and 396–442; these read MPVH…ASLA and KKGN…IRRS. The segment covering 45–54 has biased composition (pro residues); sequence IAPPPPPTPP. A compositionally biased stretch (low complexity) spans 79–97; it reads PGPRRPSNPSSPQHPQQPG. A Velvet domain is found at 213–396; it reads FSTSEYHLHV…KEQGCLISIK (184 aa). The segment covering 401–411 has biased composition (gly residues); it reads KGGGGGGGGPS. The segment covering 433-442 has biased composition (basic residues); the sequence is AGKRKRIRRS.

It belongs to the velvet family. VelC subfamily.

The protein localises to the nucleus. Its function is as follows. Velvet-domain-containing protein that acts as a positive regulator of sexual development. Plays an important role in pathogenicity through regulating positively appressorium-mediated penetration and invasive growth. In Pyricularia oryzae (strain 70-15 / ATCC MYA-4617 / FGSC 8958) (Rice blast fungus), this protein is Sexual development regulator VELC.